A 397-amino-acid chain; its full sequence is Ribosomal RNA large subunit methyltransferase I (397 aa).

The PUA domain occupies threonine 2–valine 79.

This sequence belongs to the methyltransferase superfamily. RlmI family.

The protein resides in the cytoplasm. The enzyme catalyses cytidine(1962) in 23S rRNA + S-adenosyl-L-methionine = 5-methylcytidine(1962) in 23S rRNA + S-adenosyl-L-homocysteine + H(+). In terms of biological role, specifically methylates the cytosine at position 1962 (m5C1962) of 23S rRNA. The protein is Ribosomal RNA large subunit methyltransferase I of Vibrio campbellii (strain ATCC BAA-1116).